A 330-amino-acid polypeptide reads, in one-letter code: MVTFLAGGTGTPKLLAGADDVFSPAATTVVANTGDDIELGGHLVCPDLDTVLFLDGEVLDRETWWGIADDTAETHTELTRLADAAGLDGGPRYLPDDAQTAGRDIARWRRFSGVAEFMHIGDRDRAVHVTRTSLLDEGRSLTAVTRTLADAFGLERTLLPMSDDPVASIIHTPSGPMHFQEWWVGRNGEPPVEDVEFRGAERASATDAVLTALDDTVVIGPSNPVTSLGPMLAIDDIQRALHETTVVAVSPFIEDTVFSGPAADLMAGVGLEPSTAGVAEAYPFADSFVLDEEDSTPLDVPVVRTDTTLNDAADAERVNRAVETALSEVA.

Asp49 is a binding site for 7,8-didemethyl-8-hydroxy-5-deazariboflavin.

Belongs to the CofD family. In terms of assembly, homodimer. It depends on Mg(2+) as a cofactor.

It carries out the reaction (2S)-lactyl-2-diphospho-5'-guanosine + 7,8-didemethyl-8-hydroxy-5-deazariboflavin = oxidized coenzyme F420-0 + GMP + H(+). It participates in cofactor biosynthesis; coenzyme F420 biosynthesis. Functionally, catalyzes the transfer of the 2-phospholactate moiety from (2S)-lactyl-2-diphospho-5'-guanosine to 7,8-didemethyl-8-hydroxy-5-deazariboflavin (FO) with the formation of oxidized coenzyme F420-0 and GMP. This Haloarcula marismortui (strain ATCC 43049 / DSM 3752 / JCM 8966 / VKM B-1809) (Halobacterium marismortui) protein is 2-phospho-L-lactate transferase.